A 482-amino-acid chain; its full sequence is Lipoamide acyltransferase component of branched-chain alpha-keto acid dehydrogenase complex, mitochondrial (482 aa).

The N-terminal 61 residues, 1–61, are a transit peptide targeting the mitochondrion; the sequence is MAAALVLRTW…QWLKTTAALQ (61 aa). In terms of domain architecture, Lipoyl-binding spans 64–139; that stretch reads IVQFKLSDIG…YVGKPLVDIE (76 aa). K105 carries the post-translational modification N6-lipoyllysine. N6-succinyllysine is present on K133. The critical for association with PPM1K stretch occupies residues 145-160; sequence DSEEDVVETPAVSHDE. A disordered region spans residues 146 to 171; it reads SEEDVVETPAVSHDEHTHQEIKGQKT. Basic and acidic residues predominate over residues 157–168; it reads SHDEHTHQEIKG. Residues 172 to 209 enclose the Peripheral subunit-binding (PSBD) domain; that stretch reads LATPAVRRLAMENNIKLSEVIGSGKDGRILKEDILNYL. The residue at position 196 (K196) is an N6-acetyllysine; alternate. K196 bears the N6-succinyllysine; alternate mark. An N6-acetyllysine modification is found at K202. The span at 218-230 shows a compositional bias: pro residues; sequence PPSPKAEIMPPPP. The interval 218 to 238 is disordered; the sequence is PPSPKAEIMPPPPKPKDRTIP. S220 carries the phosphoserine modification. An N6-acetyllysine mark is found at K243 and K250. K261 carries the post-translational modification N6-succinyllysine. K289 is subject to N6-acetyllysine; alternate. K289 bears the N6-succinyllysine; alternate mark. Position 291 (R291) interacts with CoA. 2 positions are modified to N6-acetyllysine: K295 and K304. The CoA site is built by S306, D349, Q378, S399, N400, S403, G424, and I426. K435 carries the post-translational modification N6-acetyllysine. N6-acetyllysine; alternate is present on K440. Position 440 is an N6-succinyllysine; alternate (K440). Catalysis depends on residues H452 and D456.

It belongs to the 2-oxoacid dehydrogenase family. As to quaternary structure, forms a 24-polypeptide structural core with octahedral symmetry that represents the E2 component of the branched-chain alpha-ketoacid dehydrogenase (BCKDH) complex. The BCKDH complex is composed of three major building blocks E1, E2 and E3. It is organized around E2, a 24-meric cubic core composed of DBT, to which are associated 6 to 12 copies of E1, and approximately 6 copies of the dehydrogenase E3, a DLD dimer. Interacts with PPM1K with a 24:1 stoichiometry; the N-terminal region (residues 49-61) of PPM1K and C-terminal linker of the lipoyl domain of DBT/E2 (residues 145-160) are critical for this interaction whereas the lipoyl prosthetic group is dispensable. This interaction requires colocalization in mitochondria. PPM1K competes with BCKDK for binding to DBT; this interaction is modulated by branched-chain alpha-keto acids (BCKAs). At steady state, BCKDH holoenzyme preferentially binds BCKDK and BCKDHA is phosphorylated. In response to high levels of BCKAs, BCKDK is replaced by PPM1K leading to BCKDHA dephosphorylation. The cofactor is (R)-lipoate. In terms of tissue distribution, expressed in kidney (at protein level).

It is found in the mitochondrion matrix. The catalysed reaction is N(6)-[(R)-dihydrolipoyl]-L-lysyl-[protein] + 2-methylpropanoyl-CoA = N(6)-[(R)-S(8)-2-methylpropanoyldihydrolipoyl]-L-lysyl-[protein] + CoA. Functionally, the branched-chain alpha-keto dehydrogenase complex catalyzes the overall conversion of alpha-keto acids to acyl-CoA and CO(2). It contains multiple copies of three enzymatic components: branched-chain alpha-keto acid decarboxylase (E1), lipoamide acyltransferase (E2) and lipoamide dehydrogenase (E3). Within this complex, the catalytic function of this enzyme is to accept, and to transfer to coenzyme A, acyl groups that are generated by the branched-chain alpha-keto acid decarboxylase component. The protein is Lipoamide acyltransferase component of branched-chain alpha-keto acid dehydrogenase complex, mitochondrial (DBT) of Bos taurus (Bovine).